The sequence spans 281 residues: 40S small subunit processome assembly factor 1 (281 aa).

The disordered stretch occupies residues 29 to 141 (LGETEGETEQ…DEDEPAKNKT (113 aa)). Ser-67 and Ser-75 each carry phosphoserine. An N6-acetyllysine modification is found at Lys-172. A disordered region spans residues 221–254 (ETDIFKKKKKKGRGQEDRRSKKSAPSILSSGQVG). Ser-267 carries the post-translational modification Phosphoserine.

As to quaternary structure, part of the small subunit (SSU) processome, composed of more than 70 proteins and the RNA chaperone small nucleolar RNA (snoRNA) U3.

Its subcellular location is the chromosome. It localises to the nucleus. The protein resides in the nucleolus. Functionally, part of the small subunit (SSU) processome, first precursor of the small eukaryotic ribosomal subunit. During the assembly of the SSU processome in the nucleolus, many ribosome biogenesis factors, an RNA chaperone and ribosomal proteins associate with the nascent pre-rRNA and work in concert to generate RNA folding, modifications, rearrangements and cleavage as well as targeted degradation of pre-ribosomal RNA by the RNA exosome. Prevents helicase DHX37 to be recruited before post-A1 state. The polypeptide is 40S small subunit processome assembly factor 1 (Mus musculus (Mouse)).